A 138-amino-acid chain; its full sequence is Ribosome-binding factor A (138 aa).

Belongs to the RbfA family. As to quaternary structure, monomer. Binds 30S ribosomal subunits, but not 50S ribosomal subunits or 70S ribosomes.

Its subcellular location is the cytoplasm. Its function is as follows. One of several proteins that assist in the late maturation steps of the functional core of the 30S ribosomal subunit. Associates with free 30S ribosomal subunits (but not with 30S subunits that are part of 70S ribosomes or polysomes). Required for efficient processing of 16S rRNA. May interact with the 5'-terminal helix region of 16S rRNA. This chain is Ribosome-binding factor A, found in Paracoccus denitrificans (strain Pd 1222).